The following is a 157-amino-acid chain: Small ribosomal subunit protein uS9 (157 aa).

It belongs to the universal ribosomal protein uS9 family.

The chain is Small ribosomal subunit protein uS9 from Caulobacter sp. (strain K31).